The chain runs to 481 residues: Argininosuccinate lyase (481 aa).

The protein belongs to the lyase 1 family. Argininosuccinate lyase subfamily.

Its subcellular location is the cytoplasm. The catalysed reaction is 2-(N(omega)-L-arginino)succinate = fumarate + L-arginine. The protein operates within amino-acid biosynthesis; L-arginine biosynthesis; L-arginine from L-ornithine and carbamoyl phosphate: step 3/3. The chain is Argininosuccinate lyase from Methanococcus vannielii (strain ATCC 35089 / DSM 1224 / JCM 13029 / OCM 148 / SB).